Consider the following 120-residue polypeptide: Large ribosomal subunit protein uL18 (120 aa).

Belongs to the universal ribosomal protein uL18 family. As to quaternary structure, part of the 50S ribosomal subunit; part of the 5S rRNA/L5/L18/L25 subcomplex. Contacts the 5S and 23S rRNAs.

In terms of biological role, this is one of the proteins that bind and probably mediate the attachment of the 5S RNA into the large ribosomal subunit, where it forms part of the central protuberance. The protein is Large ribosomal subunit protein uL18 of Rhodopseudomonas palustris (strain BisB18).